Consider the following 134-residue polypeptide: Ribosome-binding factor A (134 aa).

This sequence belongs to the RbfA family. As to quaternary structure, monomer. Binds 30S ribosomal subunits, but not 50S ribosomal subunits or 70S ribosomes.

It is found in the cytoplasm. In terms of biological role, one of several proteins that assist in the late maturation steps of the functional core of the 30S ribosomal subunit. Associates with free 30S ribosomal subunits (but not with 30S subunits that are part of 70S ribosomes or polysomes). Required for efficient processing of 16S rRNA. May interact with the 5'-terminal helix region of 16S rRNA. The chain is Ribosome-binding factor A from Rhizobium johnstonii (strain DSM 114642 / LMG 32736 / 3841) (Rhizobium leguminosarum bv. viciae).